The following is a 237-amino-acid chain: MKSLSFLNHEFEAFPSPELALTDPNGLLAIGGDLRPERLLSAYYNGIFPWFNSDDPILWWSPDPRAVFIPGEIHISTSLRKYLKKQPWRITINHAFTDVMAGCAQPREKQSGTWITQEIQMAYRELHHTGHAHSIEVWEGERLIGGLYGLAIGQVFCGESMFHRKTNASKAAVAALQQHLLKMGFKLIDAQVMNPHLESLGAKAIKRIDFITLLSELRNNPLDPATWTTKEVILELE.

Belongs to the L/F-transferase family.

The protein resides in the cytoplasm. The catalysed reaction is N-terminal L-lysyl-[protein] + L-leucyl-tRNA(Leu) = N-terminal L-leucyl-L-lysyl-[protein] + tRNA(Leu) + H(+). It carries out the reaction N-terminal L-arginyl-[protein] + L-leucyl-tRNA(Leu) = N-terminal L-leucyl-L-arginyl-[protein] + tRNA(Leu) + H(+). The enzyme catalyses L-phenylalanyl-tRNA(Phe) + an N-terminal L-alpha-aminoacyl-[protein] = an N-terminal L-phenylalanyl-L-alpha-aminoacyl-[protein] + tRNA(Phe). Functionally, functions in the N-end rule pathway of protein degradation where it conjugates Leu, Phe and, less efficiently, Met from aminoacyl-tRNAs to the N-termini of proteins containing an N-terminal arginine or lysine. This is Leucyl/phenylalanyl-tRNA--protein transferase from Shewanella baltica (strain OS195).